The primary structure comprises 284 residues: Quinate/shikimate dehydrogenase (NAD(+)) (284 aa).

Shikimate contacts are provided by S18 and T70. L-quinate is bound by residues 18-20 and T70; that span reads SRT. Residue Y73 is the Proton acceptor of the active site. Shikimate-binding residues include K74, N95, and D111. L-quinate is bound by residues K74, N95, and D111. NAD(+) is bound by residues 137–138, D159, R164, 203–206, A214, V229, and G252; these read GG and TPMG. Q259 is a binding site for shikimate. Q259 is a binding site for L-quinate.

The protein belongs to the shikimate dehydrogenase family. Homodimer.

It catalyses the reaction L-quinate + NAD(+) = 3-dehydroquinate + NADH + H(+). The enzyme catalyses shikimate + NAD(+) = 3-dehydroshikimate + NADH + H(+). The protein operates within metabolic intermediate biosynthesis; chorismate biosynthesis; chorismate from D-erythrose 4-phosphate and phosphoenolpyruvate: step 4/7. It functions in the pathway aromatic compound metabolism; 3,4-dihydroxybenzoate biosynthesis; 3-dehydroquinate from D-quinate (NAD(+) route). Its function is as follows. Involved in the biosynthesis of the chorismate, which leads to the biosynthesis of aromatic amino acids, and plays a key role in the quinate degradation pathway. Catalyzes the NAD(+)-dependent oxidation of both quinate and shikimate to 3-dehydroquinate and 3-dehydroshikimate, respectively. It can only use NAD. In Corynebacterium efficiens (strain DSM 44549 / YS-314 / AJ 12310 / JCM 11189 / NBRC 100395), this protein is Quinate/shikimate dehydrogenase (NAD(+)).